We begin with the raw amino-acid sequence, 284 residues long: 2-dehydro-3-deoxyphosphooctonate aldolase (284 aa).

Belongs to the KdsA family.

It localises to the cytoplasm. The enzyme catalyses D-arabinose 5-phosphate + phosphoenolpyruvate + H2O = 3-deoxy-alpha-D-manno-2-octulosonate-8-phosphate + phosphate. It participates in carbohydrate biosynthesis; 3-deoxy-D-manno-octulosonate biosynthesis; 3-deoxy-D-manno-octulosonate from D-ribulose 5-phosphate: step 2/3. The protein operates within bacterial outer membrane biogenesis; lipopolysaccharide biosynthesis. This chain is 2-dehydro-3-deoxyphosphooctonate aldolase, found in Shigella boydii serotype 18 (strain CDC 3083-94 / BS512).